We begin with the raw amino-acid sequence, 206 residues long: Emopamil-binding protein-like (206 aa).

Transmembrane regions (helical) follow at residues 10–30 (EAGG…ALGL), 42–62 (GALI…GPFV), 101–121 (VEIL…YAIV), and 165–185 (CWLY…LLLW). In terms of domain architecture, EXPERA spans 39–184 (ADRGALIWLC…VWVLIPGLLL (146 aa)).

Belongs to the EBP family. In terms of assembly, homodimer. As to expression, widely expressed with highest levels in liver, lung and kidney.

The protein localises to the endoplasmic reticulum membrane. Its function is as follows. Does not possess sterol isomerase activity and does not bind sigma ligands. This chain is Emopamil-binding protein-like (EBPL), found in Homo sapiens (Human).